The following is a 335-amino-acid chain: Terpene synthase 4 (335 aa).

A DDxx(x)D/E motif motif is present at residues 103–108 (DDYIFE). An NDxxSxxxD/E motif motif is present at residues 243–251 (NDLYSFNRE).

The protein belongs to the terpene synthase family.

The enzyme catalyses (2E,6E)-farnesyl diphosphate + H2O = (6E)-nerolidol + diphosphate. Its function is as follows. Terpene synthase that converts its substrate farnesyl diphosphate (FPP) into the sesquiterpene (E)-nerolidol. In Dictyostelium discoideum (Social amoeba), this protein is Terpene synthase 4.